Reading from the N-terminus, the 122-residue chain is uncharacterized protein (122 aa).

An HIT domain is found at 10 to 120 (VFARILRGEI…AGRRLGPMIT (111 aa)). The Histidine triad motif motif lies at 104 to 108 (HLHIH).

This is an uncharacterized protein from Azospirillum brasilense.